The chain runs to 226 residues: ATP synthase F(0) complex subunit a (226 aa).

The next 6 membrane-spanning stretches (helical) occupy residues 10–30 (ITPT…PPVI), 68–88 (WSLM…LGLL), 97–117 (QLSM…ILGF), 138–158 (IPML…ALAV), 164–184 (ITAG…LTSI), and 189–209 (AMIT…VALI).

The protein belongs to the ATPase A chain family. As to quaternary structure, component of the ATP synthase complex composed at least of ATP5F1A/subunit alpha, ATP5F1B/subunit beta, ATP5MC1/subunit c (homooctomer), MT-ATP6/subunit a, MT-ATP8/subunit 8, ATP5ME/subunit e, ATP5MF/subunit f, ATP5MG/subunit g, ATP5MK/subunit k, ATP5MJ/subunit j, ATP5F1C/subunit gamma, ATP5F1D/subunit delta, ATP5F1E/subunit epsilon, ATP5PF/subunit F6, ATP5PB/subunit b, ATP5PD/subunit d, ATP5PO/subunit OSCP. ATP synthase complex consists of a soluble F(1) head domain (subunits alpha(3) and beta(3)) - the catalytic core - and a membrane F(0) domain - the membrane proton channel (subunits c, a, 8, e, f, g, k and j). These two domains are linked by a central stalk (subunits gamma, delta, and epsilon) rotating inside the F1 region and a stationary peripheral stalk (subunits F6, b, d, and OSCP). Interacts with DNAJC30; interaction is direct.

The protein localises to the mitochondrion inner membrane. It catalyses the reaction H(+)(in) = H(+)(out). Its function is as follows. Subunit a, of the mitochondrial membrane ATP synthase complex (F(1)F(0) ATP synthase or Complex V) that produces ATP from ADP in the presence of a proton gradient across the membrane which is generated by electron transport complexes of the respiratory chain. ATP synthase complex consist of a soluble F(1) head domain - the catalytic core - and a membrane F(1) domain - the membrane proton channel. These two domains are linked by a central stalk rotating inside the F(1) region and a stationary peripheral stalk. During catalysis, ATP synthesis in the catalytic domain of F(1) is coupled via a rotary mechanism of the central stalk subunits to proton translocation. With the subunit c (ATP5MC1), forms the proton-conducting channel in the F(0) domain, that contains two crucial half-channels (inlet and outlet) that facilitate proton movement from the mitochondrial intermembrane space (IMS) into the matrix. Protons are taken up via the inlet half-channel and released through the outlet half-channel, following a Grotthuss mechanism. The polypeptide is ATP synthase F(0) complex subunit a (Cricetulus griseus (Chinese hamster)).